We begin with the raw amino-acid sequence, 51 residues long: Large ribosomal subunit protein eL39 (51 aa).

The protein belongs to the eukaryotic ribosomal protein eL39 family. Interacts with IMPACT.

The chain is Large ribosomal subunit protein eL39 (RPL39) from Gallus gallus (Chicken).